The following is a 137-amino-acid chain: Small ribosomal subunit protein uS9 (137 aa).

The interval L105–R137 is disordered. The segment covering K118–R137 has biased composition (basic residues).

Belongs to the universal ribosomal protein uS9 family.

This is Small ribosomal subunit protein uS9 (rpsI) from Synechocystis sp. (strain ATCC 27184 / PCC 6803 / Kazusa).